A 476-amino-acid chain; its full sequence is Adenosylhomocysteinase (476 aa).

Residues Thr61, Asp140, and Glu200 each coordinate substrate. Residue 201–203 (TTT) participates in NAD(+) binding. Positions 230 and 234 each coordinate substrate. NAD(+) is bound by residues Asn235, 264–269 (GYGDVG), Glu287, Asn322, 343–345 (IGH), and Asn389.

This sequence belongs to the adenosylhomocysteinase family. The cofactor is NAD(+).

Its subcellular location is the cytoplasm. It carries out the reaction S-adenosyl-L-homocysteine + H2O = L-homocysteine + adenosine. It functions in the pathway amino-acid biosynthesis; L-homocysteine biosynthesis; L-homocysteine from S-adenosyl-L-homocysteine: step 1/1. May play a key role in the regulation of the intracellular concentration of adenosylhomocysteine. The protein is Adenosylhomocysteinase of Acidovorax ebreus (strain TPSY) (Diaphorobacter sp. (strain TPSY)).